Consider the following 173-residue polypeptide: Protein SHI RELATED SEQUENCE 8 (173 aa).

The Zn(2+) site is built by cysteine 52, cysteine 63, cysteine 68, cysteine 72, and cysteine 79. The segment at residues 52 to 79 is a DNA-binding region (zn(2)-C6 fungal-type; degenerate); sequence CQDFGNQAKKDCSHMRCRTCCKSRGFEC. The segment covering 100–110 has biased composition (low complexity); the sequence is LATVQPQTQLP. The interval 100 to 121 is disordered; that stretch reads LATVQPQTQLPRGESVPKRHRE.

This sequence belongs to the SHI protein family.

Its subcellular location is the nucleus. In terms of biological role, transcription activator that binds DNA on 5'-ACTCTAC-3' and promotes auxin homeostasis-regulating gene expression (e.g. YUC genes), as well as genes affecting stamen development, cell expansion and timing of flowering. Synergistically with other SHI-related proteins, regulates gynoecium, stamen and leaf development in a dose-dependent manner, controlling apical-basal patterning. Promotes style and stigma formation, and influence vascular development during gynoecium development. May also have a role in the formation and/or maintenance of the shoot apical meristem (SAM). The chain is Protein SHI RELATED SEQUENCE 8 (SRS8) from Arabidopsis thaliana (Mouse-ear cress).